The sequence spans 447 residues: MARLFGTDGVRGIANYDLTPQLAFELGRAGAYVLTHGTHRPKVVVGKDSRISGDMLECALTAGLTSVGAEVISVGIIPTPAVAYLTRLYQADAGVMISASHNPVEYNGIKFFDKDGYKLPDEVEDRIENIIKEKIELPSPIGTGIGTRKEYTNSHRDYIEFLKSTIDGDLKGMKIVIDCAYGASSTIAPILFKELGAEVILHGAEPIGEKINVNCGSTHPEKLQQLVIENGADIGLAFDGDADRLIAVDEKGNVVDGDHIMAICAIDLKKKGRLKNNTVVATVMSNIGFEIALKEQGINLIRTKVGDRYVLEEMTKGGYSIGGEQSGHIIFLDDNTTGDGEITALKLCSISKESGKKLSELAACMITYPQVLINAKVKNELKNAYLEDEEIKREIENLEREMRGEGRVLIRPSGTEPLVRVMVEGKDYDKISQMAKELAELIERKLN.

Serine 100 serves as the catalytic Phosphoserine intermediate. 4 residues coordinate Mg(2+): serine 100, aspartate 239, aspartate 241, and aspartate 243. Position 100 is a phosphoserine (serine 100).

Belongs to the phosphohexose mutase family. Mg(2+) is required as a cofactor. In terms of processing, activated by phosphorylation.

The catalysed reaction is alpha-D-glucosamine 1-phosphate = D-glucosamine 6-phosphate. In terms of biological role, catalyzes the conversion of glucosamine-6-phosphate to glucosamine-1-phosphate. This chain is Phosphoglucosamine mutase, found in Thermoanaerobacter sp. (strain X514).